Here is a 469-residue protein sequence, read N- to C-terminus: 24-hydroxycholesterol 7-alpha-hydroxylase (469 aa).

Residues 1–23 (MELISPTVIIILGCLALFLLLQR) form the signal peptide. 3 helical membrane-spanning segments follow: residues 267–287 (GLLLLWASLSNAVPVAFWTLA), 352–372 (VEILNYIIPSGDLLMLSPFWL), and 412–432 (FQCPARWFALLEVQMCIILIL). Cysteine 414 contributes to the heme binding site.

Belongs to the cytochrome P450 family. Heme is required as a cofactor. In terms of tissue distribution, liver specific.

It localises to the endoplasmic reticulum membrane. The protein resides in the microsome membrane. The enzyme catalyses (24S)-hydroxycholesterol + reduced [NADPH--hemoprotein reductase] + O2 = (24S)-7alpha-dihydroxycholesterol + oxidized [NADPH--hemoprotein reductase] + H2O + H(+). It participates in steroid metabolism; cholesterol degradation. The protein operates within lipid metabolism; bile acid biosynthesis. A cytochrome P450 monooxygenase involved in neural cholesterol clearance through bile acid synthesis. Catalyzes 7-alpha hydroxylation of (24S)-hydroxycholesterol, a neural oxysterol that is metabolized to bile acids in the liver. Mechanistically, uses molecular oxygen inserting one oxygen atom into a substrate, and reducing the second into a water molecule, with two electrons provided by NADPH via cytochrome P450 reductase (CPR; NADPH-ferrihemoprotein reductase). The chain is 24-hydroxycholesterol 7-alpha-hydroxylase from Homo sapiens (Human).